Reading from the N-terminus, the 157-residue chain is 6,7-dimethyl-8-ribityllumazine synthase (157 aa).

Residues Phe-23, 57–59 (AFE), and 81–83 (AVI) contribute to the 5-amino-6-(D-ribitylamino)uracil site. 86 to 87 (ST) contacts (2S)-2-hydroxy-3-oxobutyl phosphate. His-89 functions as the Proton donor in the catalytic mechanism. Phe-114 contacts 5-amino-6-(D-ribitylamino)uracil. Arg-128 is a (2S)-2-hydroxy-3-oxobutyl phosphate binding site.

Belongs to the DMRL synthase family.

The catalysed reaction is (2S)-2-hydroxy-3-oxobutyl phosphate + 5-amino-6-(D-ribitylamino)uracil = 6,7-dimethyl-8-(1-D-ribityl)lumazine + phosphate + 2 H2O + H(+). It functions in the pathway cofactor biosynthesis; riboflavin biosynthesis; riboflavin from 2-hydroxy-3-oxobutyl phosphate and 5-amino-6-(D-ribitylamino)uracil: step 1/2. Its function is as follows. Catalyzes the formation of 6,7-dimethyl-8-ribityllumazine by condensation of 5-amino-6-(D-ribitylamino)uracil with 3,4-dihydroxy-2-butanone 4-phosphate. This is the penultimate step in the biosynthesis of riboflavin. This is 6,7-dimethyl-8-ribityllumazine synthase from Desulfosudis oleivorans (strain DSM 6200 / JCM 39069 / Hxd3) (Desulfococcus oleovorans).